We begin with the raw amino-acid sequence, 239 residues long: Lipid transferase CIDEC (239 aa).

The interval 1–35 (MDYAMKSLSLLYPRSLSRHVAVSTAVVTQQLVSKP) is required for liquid-liquid phase separation (LLPS). The 78-residue stretch at 41-118 (RARPCRVSTA…VLLKGQKWKP (78 aa)) folds into the CIDE-N domain. The RKKR polybasic motif motif lies at 123–126 (RKKR).

It belongs to the CIDE family. Homodimer. Homooligomer; undergoes liquid-liquid phase separation (LLPS) via its N-terminus, facilitating lipid droplet fusion, occurs at the lipid droplet contact sites. Interacts with CIDEA. Interacts with PLIN1. Interacts with NFAT5; this interaction is direct and retains NFAT5 in the cytoplasm. Interacts with CEBPB. Interacts with isoform CLSTN3beta of CLSTN3; inhibiting the lipid transferase activity of CIDEC. Ubiquitinated and targeted to proteasomal degradation, resulting in a short half-life (about 15 minutes in 3T3-L1 cells). Protein stability depends on triaclyglycerol synthesis, fatty acid availability and lipid droplet formation. Expressed almost exclusively in adipose tissue, including subcutaneous and epididymal white adipose tissue (at protein level). Although abundantly present in brown adipose tissue at the mRNA level, the protein is almost undetectable in this tissue, or at moderate levels. Expressed in the mammary gland, in stromal adipose tissue, but becomes undetectable at the end of pregnancy and during lactation (at protein level). Expressed at low levels in skeletal muscle and heart.

It localises to the lipid droplet. The protein localises to the endoplasmic reticulum. It is found in the nucleus. It carries out the reaction a triacyl-sn-glycerol(in) = a triacyl-sn-glycerol(out). Functionally, lipid transferase specifically expressed in white adipose tissue, which promotes unilocular lipid droplet formation by mediating lipid droplet fusion. Lipid droplet fusion promotes their enlargement, restricting lipolysis and favoring lipid storage. Localizes on the lipid droplet surface, at focal contact sites between lipid droplets, and mediates atypical lipid droplet fusion by undergoing liquid-liquid phase separation (LLPS) and promoting directional net neutral lipid transfer from the smaller to larger lipid droplets. The transfer direction may be driven by the internal pressure difference between the contacting lipid droplet pair. Its role in neutral lipid transfer and lipid droplet enlargement is activated by the interaction with PLIN1. May also act as a CEBPB coactivator in the white adipose tissue to control the expression of a subset of CEBPB downstream target genes, including SOCS1, SOCS3, TGFB1, TGFBR1, ID2 and XDH. When overexpressed in preadipocytes, induces apoptosis or increases cell susceptibility to apoptosis induced by serum deprivation or TGFB treatment. This chain is Lipid transferase CIDEC, found in Mus musculus (Mouse).